A 76-amino-acid polypeptide reads, in one-letter code: Conotoxin Vc6.6 (76 aa).

An N-terminal signal peptide occupies residues 1–22 (MKLTCMVIVAVLFLTANTFVTA). The propeptide occupies 23–52 (VPHSSNALENLYLKAHHEMNNPKDSELNKR). Intrachain disulfides connect C53-C67, C60-C71, and C66-C75.

The protein belongs to the conotoxin O1 superfamily. As to expression, expressed by the venom duct.

The protein localises to the secreted. The polypeptide is Conotoxin Vc6.6 (Conus victoriae (Queen Victoria cone)).